The following is a 569-amino-acid chain: Glutamate--tRNA ligase (569 aa).

The 'HIGH' region signature appears at 108–118 (PNPDFVLHLGS).

Belongs to the class-I aminoacyl-tRNA synthetase family. Glutamate--tRNA ligase type 2 subfamily.

It localises to the cytoplasm. The catalysed reaction is tRNA(Glu) + L-glutamate + ATP = L-glutamyl-tRNA(Glu) + AMP + diphosphate. Functionally, catalyzes the attachment of glutamate to tRNA(Glu) in a two-step reaction: glutamate is first activated by ATP to form Glu-AMP and then transferred to the acceptor end of tRNA(Glu). In Thermofilum pendens (strain DSM 2475 / Hrk 5), this protein is Glutamate--tRNA ligase.